Consider the following 408-residue polypeptide: Succinylornithine transaminase (408 aa).

An N6-(pyridoxal phosphate)lysine modification is found at lysine 252.

It belongs to the class-III pyridoxal-phosphate-dependent aminotransferase family. AstC subfamily. Requires pyridoxal 5'-phosphate as cofactor.

It carries out the reaction N(2)-succinyl-L-ornithine + 2-oxoglutarate = N-succinyl-L-glutamate 5-semialdehyde + L-glutamate. Its pathway is amino-acid degradation; L-arginine degradation via AST pathway; L-glutamate and succinate from L-arginine: step 3/5. In terms of biological role, catalyzes the transamination of N(2)-succinylornithine and alpha-ketoglutarate into N(2)-succinylglutamate semialdehyde and glutamate. Can also act as an acetylornithine aminotransferase. This is Succinylornithine transaminase from Salmonella typhi.